The primary structure comprises 405 residues: L-rhamnonate dehydratase (405 aa).

Substrate-binding residues include H33 and R59. Residues D226, E252, and E280 each contribute to the Mg(2+) site. H329 serves as the catalytic Proton acceptor. E349 serves as a coordination point for substrate.

The protein belongs to the mandelate racemase/muconate lactonizing enzyme family. RhamD subfamily. Homooctamer; tetramer of dimers. It depends on Mg(2+) as a cofactor.

The enzyme catalyses L-rhamnonate = 2-dehydro-3-deoxy-L-rhamnonate + H2O. In terms of biological role, catalyzes the dehydration of L-rhamnonate to 2-keto-3-deoxy-L-rhamnonate (KDR). The polypeptide is L-rhamnonate dehydratase (Salmonella paratyphi C (strain RKS4594)).